The chain runs to 356 residues: DNA polymerase IV (356 aa).

The UmuC domain maps to 6–187 (IIHIDMDYFF…LDIGDFPGVG (182 aa)). Positions 10 and 105 each coordinate Mg(2+). Residue Glu106 is part of the active site.

This sequence belongs to the DNA polymerase type-Y family. In terms of assembly, monomer. It depends on Mg(2+) as a cofactor.

The protein resides in the cytoplasm. The catalysed reaction is DNA(n) + a 2'-deoxyribonucleoside 5'-triphosphate = DNA(n+1) + diphosphate. Functionally, poorly processive, error-prone DNA polymerase involved in untargeted mutagenesis. Copies undamaged DNA at stalled replication forks, which arise in vivo from mismatched or misaligned primer ends. These misaligned primers can be extended by PolIV. Exhibits no 3'-5' exonuclease (proofreading) activity. May be involved in translesional synthesis, in conjunction with the beta clamp from PolIII. This is DNA polymerase IV from Staphylococcus aureus (strain Mu50 / ATCC 700699).